We begin with the raw amino-acid sequence, 398 residues long: 1-deoxy-D-xylulose 5-phosphate reductoisomerase (398 aa).

Positions 11, 12, 13, 14, and 125 each coordinate NADPH. 1-deoxy-D-xylulose 5-phosphate is bound at residue Lys-126. Glu-127 is an NADPH binding site. Position 151 (Asp-151) interacts with Mn(2+). Ser-152, Glu-153, Ser-186, and His-209 together coordinate 1-deoxy-D-xylulose 5-phosphate. Glu-153 contacts Mn(2+). Gly-215 serves as a coordination point for NADPH. 1-deoxy-D-xylulose 5-phosphate contacts are provided by Ser-222, Asn-227, Lys-228, and Glu-231. Glu-231 lines the Mn(2+) pocket.

The protein belongs to the DXR family. The cofactor is Mg(2+). It depends on Mn(2+) as a cofactor.

The enzyme catalyses 2-C-methyl-D-erythritol 4-phosphate + NADP(+) = 1-deoxy-D-xylulose 5-phosphate + NADPH + H(+). The protein operates within isoprenoid biosynthesis; isopentenyl diphosphate biosynthesis via DXP pathway; isopentenyl diphosphate from 1-deoxy-D-xylulose 5-phosphate: step 1/6. Its function is as follows. Catalyzes the NADPH-dependent rearrangement and reduction of 1-deoxy-D-xylulose-5-phosphate (DXP) to 2-C-methyl-D-erythritol 4-phosphate (MEP). In Acinetobacter baylyi (strain ATCC 33305 / BD413 / ADP1), this protein is 1-deoxy-D-xylulose 5-phosphate reductoisomerase.